The primary structure comprises 294 residues: MKREDVLMEALPYIQKFHGRSMVIKLGGHAMVDTCIMDTVIRDVVLLQLVGIKCVIVHGGGPEITEKMKAMGKQPRFVSGLRITDDDTLEVAQMVLVGKINSKIVSLVSRAGGRAVGISGNDANLIIARKMDRQKVRVENREEEVDLGHVGEIEEIRPALLHTLLDNQFIPVISPLAIDRNGNDLNINADTAAGELAIALGAHKLISMTDVDGIMNRERTEVYRRMTPQDAEELIASGVVSEGMIPKVLAVLRALHGGVPYAHIINGNLAHNLIMELFTAEGVGTMITDRIDEV.

Residues 60 to 61 (GG), Arg82, and Asn186 each bind substrate.

It belongs to the acetylglutamate kinase family. ArgB subfamily.

Its subcellular location is the cytoplasm. The enzyme catalyses N-acetyl-L-glutamate + ATP = N-acetyl-L-glutamyl 5-phosphate + ADP. It participates in amino-acid biosynthesis; L-arginine biosynthesis; N(2)-acetyl-L-ornithine from L-glutamate: step 2/4. Catalyzes the ATP-dependent phosphorylation of N-acetyl-L-glutamate. The polypeptide is Acetylglutamate kinase (Methanospirillum hungatei JF-1 (strain ATCC 27890 / DSM 864 / NBRC 100397 / JF-1)).